We begin with the raw amino-acid sequence, 138 residues long: Small ribosomal subunit protein uS11c (138 aa).

The interval 1 to 23 (MAKPILRIGSRKNTRSGSRKNVR) is disordered. Residues 9–23 (GSRKNTRSGSRKNVR) are compositionally biased toward basic residues.

The protein belongs to the universal ribosomal protein uS11 family. Part of the 30S ribosomal subunit.

The protein localises to the plastid. Its subcellular location is the chloroplast. In Crucihimalaya wallichii (Rock-cress), this protein is Small ribosomal subunit protein uS11c.